A 435-amino-acid chain; its full sequence is Serine--tRNA ligase (435 aa).

240 to 242 (TAE) contributes to the L-serine binding site. 271–273 (RSE) serves as a coordination point for ATP. E294 provides a ligand contact to L-serine. 358–361 (EISS) is an ATP binding site. Position 393 (S393) interacts with L-serine.

This sequence belongs to the class-II aminoacyl-tRNA synthetase family. Type-1 seryl-tRNA synthetase subfamily. In terms of assembly, homodimer. The tRNA molecule binds across the dimer.

The protein resides in the cytoplasm. It carries out the reaction tRNA(Ser) + L-serine + ATP = L-seryl-tRNA(Ser) + AMP + diphosphate + H(+). The enzyme catalyses tRNA(Sec) + L-serine + ATP = L-seryl-tRNA(Sec) + AMP + diphosphate + H(+). It participates in aminoacyl-tRNA biosynthesis; selenocysteinyl-tRNA(Sec) biosynthesis; L-seryl-tRNA(Sec) from L-serine and tRNA(Sec): step 1/1. Functionally, catalyzes the attachment of serine to tRNA(Ser). Is also able to aminoacylate tRNA(Sec) with serine, to form the misacylated tRNA L-seryl-tRNA(Sec), which will be further converted into selenocysteinyl-tRNA(Sec). This Cupriavidus metallidurans (strain ATCC 43123 / DSM 2839 / NBRC 102507 / CH34) (Ralstonia metallidurans) protein is Serine--tRNA ligase.